Reading from the N-terminus, the 214-residue chain is tRNA (guanine-N(7)-)-methyltransferase (214 aa).

E44, E69, D96, and D118 together coordinate S-adenosyl-L-methionine. Residue D118 is part of the active site. Substrate-binding positions include K122, D154, and 191 to 194 (TEYE).

The protein belongs to the class I-like SAM-binding methyltransferase superfamily. TrmB family.

It carries out the reaction guanosine(46) in tRNA + S-adenosyl-L-methionine = N(7)-methylguanosine(46) in tRNA + S-adenosyl-L-homocysteine. The protein operates within tRNA modification; N(7)-methylguanine-tRNA biosynthesis. Catalyzes the formation of N(7)-methylguanine at position 46 (m7G46) in tRNA. The protein is tRNA (guanine-N(7)-)-methyltransferase of Listeria welshimeri serovar 6b (strain ATCC 35897 / DSM 20650 / CCUG 15529 / CIP 8149 / NCTC 11857 / SLCC 5334 / V8).